The chain runs to 466 residues: Fumarate hydratase class II (466 aa).

Residues 99 to 101 (SGT), 129 to 132 (HPND), 139 to 141 (SSN), and threonine 187 each bind substrate. Histidine 188 serves as the catalytic Proton donor/acceptor. Residue serine 318 is part of the active site. Substrate is bound by residues serine 319 and 324 to 326 (KVN).

This sequence belongs to the class-II fumarase/aspartase family. Fumarase subfamily. In terms of assembly, homotetramer.

It is found in the cytoplasm. The catalysed reaction is (S)-malate = fumarate + H2O. Its pathway is carbohydrate metabolism; tricarboxylic acid cycle; (S)-malate from fumarate: step 1/1. Its function is as follows. Involved in the TCA cycle. Catalyzes the stereospecific interconversion of fumarate to L-malate. The chain is Fumarate hydratase class II from Thermus thermophilus (strain ATCC BAA-163 / DSM 7039 / HB27).